Consider the following 600-residue polypeptide: Putative dehydrogenase XoxF (600 aa).

The signal sequence occupies residues methionine 1–alanine 21. Ca(2+) contacts are provided by glutamate 192 and asparagine 276. Residue aspartate 318 is the Proton acceptor of the active site.

It belongs to the bacterial PQQ dehydrogenase family. Pyrroloquinoline quinone is required as a cofactor. It depends on Ca(2+) as a cofactor.

The polypeptide is Putative dehydrogenase XoxF (xoxF) (Paracoccus denitrificans).